We begin with the raw amino-acid sequence, 453 residues long: Phosphoglucosamine mutase (453 aa).

The active-site Phosphoserine intermediate is S105. Residues S105, D244, D246, and D248 each contribute to the Mg(2+) site. At S105 the chain carries Phosphoserine.

Belongs to the phosphohexose mutase family. It depends on Mg(2+) as a cofactor. In terms of processing, activated by phosphorylation.

It carries out the reaction alpha-D-glucosamine 1-phosphate = D-glucosamine 6-phosphate. Functionally, catalyzes the conversion of glucosamine-6-phosphate to glucosamine-1-phosphate. This Blochmanniella pennsylvanica (strain BPEN) protein is Phosphoglucosamine mutase.